A 102-amino-acid polypeptide reads, in one-letter code: MKKVLALVVAAAMGLSSAAFAAETATTPAPTATTTKAAPAKTTHHKKQHKAAPAQKAQAAKKHHKNTKAEQKAPEQKAQAAKKHAKKHSHQQPAKPAAQPAA.

The signal sequence occupies residues 1 to 21 (MKKVLALVVAAAMGLSSAAFA). The segment covering 22 to 41 (AETATTPAPTATTTKAAPAK) has biased composition (low complexity). Positions 22–58 (AETATTPAPTATTTKAAPAKTTHHKKQHKAAPAQKAQ) are excised as a propeptide. A disordered region spans residues 22-102 (AETATTPAPT…PAKPAAQPAA (81 aa)). Over residues 80–90 (AAKKHAKKHSH) the composition is skewed to basic residues. Over residues 91-102 (QQPAKPAAQPAA) the composition is skewed to low complexity.

This sequence belongs to the Asr family. In terms of processing, proteolytic processing gives rise to the active protein.

It is found in the periplasm. Functionally, required for growth and/or survival at acidic conditions. The polypeptide is Acid shock protein (asr) (Escherichia coli O157:H7).